The sequence spans 344 residues: Dihydroorotase (344 aa).

H13 and H15 together coordinate Zn(2+). Substrate contacts are provided by residues 15 to 17 (HFR) and N41. Zn(2+)-binding residues include K98, H135, and H173. The residue at position 98 (K98) is an N6-carboxylysine. H135 provides a ligand contact to substrate. L218 contributes to the substrate binding site. D246 serves as a coordination point for Zn(2+). D246 is a catalytic residue. Substrate-binding residues include H250 and A262.

It belongs to the metallo-dependent hydrolases superfamily. DHOase family. Class II DHOase subfamily. As to quaternary structure, homodimer. Zn(2+) serves as cofactor.

The enzyme catalyses (S)-dihydroorotate + H2O = N-carbamoyl-L-aspartate + H(+). It functions in the pathway pyrimidine metabolism; UMP biosynthesis via de novo pathway; (S)-dihydroorotate from bicarbonate: step 3/3. Functionally, catalyzes the reversible cyclization of carbamoyl aspartate to dihydroorotate. This Shewanella woodyi (strain ATCC 51908 / MS32) protein is Dihydroorotase.